The sequence spans 87 residues: Kawaguchipeptin peptide (87 aa).

The propeptide occupies 1–33 (MKNPTLLPKLTAPVERPAVTSSDLKQASSVDAA). A lipid anchor (3'-prenyl-2',N2-cyclotryptophan; partial) is attached at W34. Residues 34–44 (WLNGDNNWSTP) constitute a cross-link (cyclopeptide (Trp-Pro)). A D-leucine; partial modification is found at L35. A lipid anchor (3'-prenyl-2',N2-cyclotryptophan; partial) is attached at W41. Residues 45-51 (FAGVNAA) constitute a propeptide that is removed on maturation. W52 carries 3'-prenyl-2',N2-cyclotryptophan; partial lipidation. The cyclopeptide (Trp-Pro) cross-link spans 52 to 62 (WLNGDNNWSTP). L53 is modified (D-leucine; partial). W59 is lipidated: 3'-prenyl-2',N2-cyclotryptophan; partial. Residues 63-69 (FAGVNAA) constitute a propeptide that is removed on maturation. W70 is lipidated: 3'-prenyl-2',N2-cyclotryptophan; partial. Positions 70–80 (WLNGDNNWSTP) form a cross-link, cyclopeptide (Trp-Pro). A D-leucine; partial modification is found at L71. Residue W77 is the site of 3'-prenyl-2',N2-cyclotryptophan; partial attachment. A propeptide spanning residues 81-87 (FAADGAE) is cleaved from the precursor.

Post-translationally, kawaguchipeptin A contains a D-Leu and 2 prenylated Trp, whereas kawaguchipeptin B only contains unmodified amino acids. In terms of processing, kawaguchipeptin A is prenylated in vivo. Upon expression in E.coli of the whole operon, Trp residues are prenylated by C-prenyltransferase KgpF. Prenylation by KgpF is likely the last enzymatic step in the biosynthetic maturation of kawaguchipeptin A.

Both kawaguchipeptin A and B, which only differ by post-translational modifications, have antibacterial activities, since they inhibit the growth of the Gram-positive bacterium S.aureus at a concentration of 1 ug/mL. The sequence is that of Kawaguchipeptin peptide from Microcystis aeruginosa (strain NIES-88 / KW-MA1-3).